Consider the following 354-residue polypeptide: Probable L-ascorbate-6-phosphate lactonase UlaG (354 aa).

This sequence belongs to the UlaG family. A divalent metal cation serves as cofactor.

Its subcellular location is the cytoplasm. It carries out the reaction L-ascorbate 6-phosphate + H2O = 3-dehydro-L-gulonate 6-phosphate. It functions in the pathway cofactor degradation; L-ascorbate degradation; D-xylulose 5-phosphate from L-ascorbate: step 1/4. In terms of biological role, probably catalyzes the hydrolysis of L-ascorbate-6-P into 3-keto-L-gulonate-6-P. Is essential for L-ascorbate utilization under anaerobic conditions. The polypeptide is Probable L-ascorbate-6-phosphate lactonase UlaG (Shigella boydii serotype 18 (strain CDC 3083-94 / BS512)).